Consider the following 272-residue polypeptide: Ribosomal RNA small subunit methyltransferase A (272 aa).

S-adenosyl-L-methionine-binding residues include Asn18, Leu20, Gly45, Glu66, Asp91, and Asn113.

This sequence belongs to the class I-like SAM-binding methyltransferase superfamily. rRNA adenine N(6)-methyltransferase family. RsmA subfamily.

The protein localises to the cytoplasm. The enzyme catalyses adenosine(1518)/adenosine(1519) in 16S rRNA + 4 S-adenosyl-L-methionine = N(6)-dimethyladenosine(1518)/N(6)-dimethyladenosine(1519) in 16S rRNA + 4 S-adenosyl-L-homocysteine + 4 H(+). Its function is as follows. Specifically dimethylates two adjacent adenosines (A1518 and A1519) in the loop of a conserved hairpin near the 3'-end of 16S rRNA in the 30S particle. May play a critical role in biogenesis of 30S subunits. This is Ribosomal RNA small subunit methyltransferase A from Yersinia pestis bv. Antiqua (strain Antiqua).